The sequence spans 126 residues: Histone H2B type 1-K (126 aa).

Residues Met-1–Lys-12 show a composition bias toward low complexity. The interval Met-1–Glu-36 is disordered. The residue at position 2 (Pro-2) is an N-acetylproline. ADP-ribosyl glutamic acid is present on Glu-3. Lys-6 is modified (N6-(2-hydroxyisobutyryl)lysine; alternate). At Lys-6 the chain carries N6-(beta-hydroxybutyryl)lysine; alternate. Lys-6 is subject to N6-acetyllysine; alternate. Residue Lys-6 is modified to N6-butyryllysine; alternate. An N6-crotonyllysine; alternate modification is found at Lys-6. Lys-6 is subject to N6-lactoyllysine; alternate. Lys-6 participates in a covalent cross-link: Glycyl lysine isopeptide (Lys-Gly) (interchain with G-Cter in SUMO2); alternate. At Ser-7 the chain carries ADP-ribosylserine. Lys-12 is modified (N6-(beta-hydroxybutyryl)lysine; alternate). 2 positions are modified to N6-acetyllysine; alternate: Lys-12 and Lys-13. 2 positions are modified to N6-crotonyllysine; alternate: Lys-12 and Lys-13. Lys-12 carries the N6-lactoyllysine; alternate modification. At Lys-13 the chain carries N6-(2-hydroxyisobutyryl)lysine; alternate. Ser-15 carries the post-translational modification Phosphoserine; by STK4/MST1. N6-acetyllysine; alternate is present on residues Lys-16, Lys-17, Lys-21, and Lys-24. N6-crotonyllysine; alternate occurs at positions 16, 17, 21, and 24. N6-lactoyllysine; alternate occurs at positions 16, 17, 21, and 24. Lys-17 carries the N6-glutaryllysine; alternate modification. 2 positions are modified to N6-(2-hydroxyisobutyryl)lysine; alternate: Lys-21 and Lys-24. Lys-21 carries the N6-(beta-hydroxybutyryl)lysine; alternate modification. Lys-21 is modified (N6-butyryllysine; alternate). Residue Lys-21 forms a Glycyl lysine isopeptide (Lys-Gly) (interchain with G-Cter in SUMO2); alternate linkage. Lys-25 is modified (N6-(2-hydroxyisobutyryl)lysine). Lys-35 is modified (N6-(2-hydroxyisobutyryl)lysine; alternate). Residue Lys-35 is modified to N6-(beta-hydroxybutyryl)lysine; alternate. Lys-35 carries the N6-crotonyllysine; alternate modification. The residue at position 35 (Lys-35) is an N6-glutaryllysine; alternate. The residue at position 35 (Lys-35) is an N6-succinyllysine; alternate. Residue Lys-35 forms a Glycyl lysine isopeptide (Lys-Gly) (interchain with G-Cter in ubiquitin); alternate linkage. PolyADP-ribosyl glutamic acid is present on Glu-36. Position 37 is a phosphoserine; by AMPK (Ser-37). 3 positions are modified to N6-(2-hydroxyisobutyryl)lysine; alternate: Lys-44, Lys-47, and Lys-58. Lys-44 bears the N6-lactoyllysine; alternate mark. Lys-44 and Lys-47 each carry N6-glutaryllysine; alternate. The residue at position 47 (Lys-47) is an N6-methyllysine; alternate. At Lys-58 the chain carries N6,N6-dimethyllysine; alternate. Arg-80 is subject to Dimethylated arginine. Lys-86 carries the N6-(2-hydroxyisobutyryl)lysine; alternate modification. Lys-86 carries the N6-acetyllysine; alternate modification. At Lys-86 the chain carries N6-lactoyllysine; alternate. An N6,N6,N6-trimethyllysine; alternate modification is found at Lys-86. Omega-N-methylarginine is present on residues Arg-87 and Arg-93. Lys-109 carries the post-translational modification N6-(2-hydroxyisobutyryl)lysine; alternate. At Lys-109 the chain carries N6-(beta-hydroxybutyryl)lysine; alternate. Lys-109 is modified (N6-lactoyllysine; alternate). Residue Lys-109 is modified to N6-glutaryllysine; alternate. Lys-109 carries the post-translational modification N6-methyllysine; alternate. Ser-113 is a glycosylation site (O-linked (GlcNAc) serine). Thr-116 carries the phosphothreonine modification. N6-(2-hydroxyisobutyryl)lysine; alternate occurs at positions 117 and 121. Position 117 is an N6-(beta-hydroxybutyryl)lysine; alternate (Lys-117). Lys-117 and Lys-121 each carry N6-lactoyllysine; alternate. Residues Lys-117 and Lys-121 each carry the N6-glutaryllysine; alternate modification. An N6-succinyllysine; alternate mark is found at Lys-117 and Lys-121. Residue Lys-117 is modified to N6-methylated lysine; alternate. Lys-121 participates in a covalent cross-link: Glycyl lysine isopeptide (Lys-Gly) (interchain with G-Cter in ubiquitin); alternate.

It belongs to the histone H2B family. As to quaternary structure, the nucleosome is a histone octamer containing two molecules each of H2A, H2B, H3 and H4 assembled in one H3-H4 heterotetramer and two H2A-H2B heterodimers. The octamer wraps approximately 147 bp of DNA. Monoubiquitination at Lys-35 (H2BK34Ub) by the MSL1/MSL2 dimer is required for histone H3 'Lys-4' (H3K4me) and 'Lys-79' (H3K79me) methylation and transcription activation at specific gene loci, such as HOXA9 and MEIS1 loci. Similarly, monoubiquitination at Lys-121 (H2BK120Ub) by the RNF20/40 complex gives a specific tag for epigenetic transcriptional activation and is also prerequisite for histone H3 'Lys-4' and 'Lys-79' methylation. It also functions cooperatively with the FACT dimer to stimulate elongation by RNA polymerase II. H2BK120Ub also acts as a regulator of mRNA splicing: deubiquitination by USP49 is required for efficient cotranscriptional splicing of a large set of exons. In terms of processing, phosphorylated on Ser-15 (H2BS14ph) by STK4/MST1 during apoptosis; which facilitates apoptotic chromatin condensation. Also phosphorylated on Ser-15 in response to DNA double strand breaks (DSBs), and in correlation with somatic hypermutation and immunoglobulin class-switch recombination. Phosphorylation at Ser-37 (H2BS36ph) by AMPK in response to stress promotes transcription. Post-translationally, glcNAcylation at Ser-113 promotes monoubiquitination of Lys-121. It fluctuates in response to extracellular glucose, and associates with transcribed genes. ADP-ribosylated by PARP1 or PARP2 on Ser-7 (H2BS6ADPr) in response to DNA damage. H2BS6ADPr promotes recruitment of CHD1L. Mono-ADP-ribosylated on Glu-3 (H2BE2ADPr) by PARP3 in response to single-strand breaks. Poly ADP-ribosylation on Glu-36 (H2BE35ADPr) by PARP1 regulates adipogenesis: it inhibits phosphorylation at Ser-37 (H2BS36ph), thereby blocking expression of pro-adipogenetic genes. In terms of processing, crotonylation (Kcr) is specifically present in male germ cells and marks testis-specific genes in post-meiotic cells, including X-linked genes that escape sex chromosome inactivation in haploid cells. Crotonylation marks active promoters and enhancers and confers resistance to transcriptional repressors. It is also associated with post-meiotically activated genes on autosomes. Post-translationally, hydroxybutyrylation of histones is induced by starvation. Lactylated in macrophages by EP300/P300 by using lactoyl-CoA directly derived from endogenous or exogenous lactate, leading to stimulates gene transcription.

Its subcellular location is the nucleus. It is found in the chromosome. Functionally, core component of nucleosome. Nucleosomes wrap and compact DNA into chromatin, limiting DNA accessibility to the cellular machineries which require DNA as a template. Histones thereby play a central role in transcription regulation, DNA repair, DNA replication and chromosomal stability. DNA accessibility is regulated via a complex set of post-translational modifications of histones, also called histone code, and nucleosome remodeling. The sequence is that of Histone H2B type 1-K from Mus musculus (Mouse).